Here is an 88-residue protein sequence, read N- to C-terminus: Small ribosomal subunit protein uS19 (88 aa).

The protein belongs to the universal ribosomal protein uS19 family.

Protein S19 forms a complex with S13 that binds strongly to the 16S ribosomal RNA. The protein is Small ribosomal subunit protein uS19 of Carsonella ruddii (strain PV).